The sequence spans 719 residues: DNA ligase (719 aa).

NAD(+) is bound by residues 42-46, 91-92, and glutamate 125; these read DAEYD and SL. The active-site N6-AMP-lysine intermediate is lysine 127. The NAD(+) site is built by arginine 148, glutamate 184, lysine 300, and lysine 324. Zn(2+) is bound by residues cysteine 429, cysteine 432, cysteine 447, and cysteine 453. In terms of domain architecture, BRCT spans 638–719; that stretch reads TASSPIAGKT…WLQLIEGSYI (82 aa).

The protein belongs to the NAD-dependent DNA ligase family. LigA subfamily. Mg(2+) serves as cofactor. Mn(2+) is required as a cofactor.

It carries out the reaction NAD(+) + (deoxyribonucleotide)n-3'-hydroxyl + 5'-phospho-(deoxyribonucleotide)m = (deoxyribonucleotide)n+m + AMP + beta-nicotinamide D-nucleotide.. Functionally, DNA ligase that catalyzes the formation of phosphodiester linkages between 5'-phosphoryl and 3'-hydroxyl groups in double-stranded DNA using NAD as a coenzyme and as the energy source for the reaction. It is essential for DNA replication and repair of damaged DNA. In Bartonella quintana (strain Toulouse) (Rochalimaea quintana), this protein is DNA ligase.